The sequence spans 178 residues: MSTSESPNTPGQGRRARARARELALLALYQWQMTGQDLGAIEAQHLEIDPEEPPVEAGDDEHYPRYPHDGLDRPYFRALLHGVPARLNDLDQALEPLLDRPLRTLDPLEKALLRLGAWELSERMDTPWRVIINEAVNLAKRFGAEQSHRYINGVLDKLARGLPLRATEIEADRKRRGR.

It belongs to the NusB family.

Its function is as follows. Involved in transcription antitermination. Required for transcription of ribosomal RNA (rRNA) genes. Binds specifically to the boxA antiterminator sequence of the ribosomal RNA (rrn) operons. The chain is Transcription antitermination protein NusB from Alkalilimnicola ehrlichii (strain ATCC BAA-1101 / DSM 17681 / MLHE-1).